The chain runs to 336 residues: Biotin synthase (336 aa).

The region spanning 57-286 is the Radical SAM core domain; sequence HHGKSIDLCS…RAIVRTAGGR (230 aa). Cys75, Cys79, and Cys82 together coordinate [4Fe-4S] cluster. Residues Ser119, Cys151, Cys211, and Arg281 each contribute to the [2Fe-2S] cluster site.

Belongs to the radical SAM superfamily. Biotin synthase family. In terms of assembly, homodimer. [4Fe-4S] cluster is required as a cofactor. Requires [2Fe-2S] cluster as cofactor.

It carries out the reaction (4R,5S)-dethiobiotin + (sulfur carrier)-SH + 2 reduced [2Fe-2S]-[ferredoxin] + 2 S-adenosyl-L-methionine = (sulfur carrier)-H + biotin + 2 5'-deoxyadenosine + 2 L-methionine + 2 oxidized [2Fe-2S]-[ferredoxin]. The protein operates within cofactor biosynthesis; biotin biosynthesis; biotin from 7,8-diaminononanoate: step 2/2. Its function is as follows. Catalyzes the conversion of dethiobiotin (DTB) to biotin by the insertion of a sulfur atom into dethiobiotin via a radical-based mechanism. In Desulfotalea psychrophila (strain LSv54 / DSM 12343), this protein is Biotin synthase.